The chain runs to 262 residues: Ornithine carbamoyltransferase (262 aa).

Carbamoyl phosphate-binding positions include 3–7 (STRTR), Q30, R54, and 81–84 (HPTQ). L-ornithine is bound by residues N114, D178, and 182 to 183 (SM). Carbamoyl phosphate-binding positions include 219–222 (HCLP) and T247.

Belongs to the aspartate/ornithine carbamoyltransferase superfamily. OTCase family.

The protein localises to the cytoplasm. The enzyme catalyses carbamoyl phosphate + L-ornithine = L-citrulline + phosphate + H(+). The protein operates within amino-acid biosynthesis; L-arginine biosynthesis; L-arginine from L-ornithine and carbamoyl phosphate: step 1/3. This Neisseria cinerea protein is Ornithine carbamoyltransferase (argF).